Consider the following 274-residue polypeptide: uncharacterized protein (274 aa).

Positions 1 to 15 (MEESKTKRKEDRIDL) are enriched in basic and acidic residues. The interval 1–40 (MEESKTKRKEDRIDLKNTPPQKKSKRDSTNDETARTSLRS) is disordered. Residues 41–87 (IMPRGYKMMENMGYKEGETLGSNESALKEPIKVEINTKRRGIRAEKP) form the G-patch domain.

It is found in the cytoplasm. It localises to the nucleus. This is an uncharacterized protein from Saccharomyces cerevisiae (strain ATCC 204508 / S288c) (Baker's yeast).